We begin with the raw amino-acid sequence, 211 residues long: Protein DEHYDRATION-INDUCED 19 homolog 7 (211 aa).

At Thr-113 the chain carries Phosphothreonine. The tract at residues 163–194 (GDSVAQVSPKDTSKSKIQQESFSNEDQEKAKK) is disordered. Polar residues predominate over residues 167–186 (AQVSPKDTSKSKIQQESFSN).

The protein belongs to the Di19 family. Not phosphorylated in vitro by CPK3 or CPK11. In terms of tissue distribution, expressed in seedlings, roots, leaves, stems, flowers and siliques.

Its subcellular location is the nucleus. Its function is as follows. Involved in both red and blue light signaling. This is Protein DEHYDRATION-INDUCED 19 homolog 7 (DI19-7) from Arabidopsis thaliana (Mouse-ear cress).